Here is an 83-residue protein sequence, read N- to C-terminus: Large ribosomal subunit protein eL31 (83 aa).

This sequence belongs to the eukaryotic ribosomal protein eL31 family.

The sequence is that of Large ribosomal subunit protein eL31 from Methanococcus maripaludis (strain DSM 14266 / JCM 13030 / NBRC 101832 / S2 / LL).